The primary structure comprises 264 residues: NADH dehydrogenase [ubiquinone] iron-sulfur protein 3, mitochondrial (264 aa).

The transit peptide at Met-1–Arg-36 directs the protein to the mitochondrion.

Belongs to the complex I 30 kDa subunit family. Core subunit of respiratory chain NADH dehydrogenase (Complex I) which is composed of 45 different subunits. Interacts with NDUFAF3. Interacts with RAB5IF. Found in subcomplexes containing subunits NDUFS2, MT-ND1 and NDUFA13.

The protein resides in the mitochondrion inner membrane. The enzyme catalyses a ubiquinone + NADH + 5 H(+)(in) = a ubiquinol + NAD(+) + 4 H(+)(out). In terms of biological role, core subunit of the mitochondrial membrane respiratory chain NADH dehydrogenase (Complex I) which catalyzes electron transfer from NADH through the respiratory chain, using ubiquinone as an electron acceptor. Essential for the catalytic activity and assembly of complex I. This is NADH dehydrogenase [ubiquinone] iron-sulfur protein 3, mitochondrial (NDUFS3) from Pan troglodytes (Chimpanzee).